Here is a 219-residue protein sequence, read N- to C-terminus: Leukocyte surface antigen CD53 (219 aa).

At 1 to 11 (MGMSSLKLLKY) the chain is on the cytoplasmic side. A helical membrane pass occupies residues 12–32 (VLFFFNLLFWICGCCILGFGI). Over 33 to 54 (YLLIHNNFGVLFHNLPSLTLGN) the chain is Extracellular. The chain crosses the membrane as a helical span at residues 55-69 (VFVIVGSIIMVVAFL). The Cytoplasmic portion of the chain corresponds to 70-80 (GCMGSIKENKC). A helical membrane pass occupies residues 81–106 (LLMSFFILLLIILLAEVTLAILLFVY). Residues 107 to 181 (EQKLNEYVAK…AKARLWFHSN (75 aa)) lie on the Extracellular side of the membrane. Asn129 and Asn148 each carry an N-linked (GlcNAc...) asparagine glycan. The chain crosses the membrane as a helical span at residues 182-206 (FLYIGIITICVCVIEVLGMSFALTL). Residues 207–219 (NCQIDKTSQTIGL) lie on the Cytoplasmic side of the membrane.

This sequence belongs to the tetraspanin (TM4SF) family. As to quaternary structure, interacts with SCIMP. Interacts with CD45/PTPRC. Interacts with IL7R. Interacts with RBL2 and PPP2CA. As to expression, B-cells, monocytes, macrophages, neutrophils, single (CD4 or CD8) positive thymocytes and peripheral T-cells.

Its subcellular location is the cell membrane. The protein localises to the cell junction. It is found in the membrane. The protein resides in the synapse. Structural component of specialized membrane microdomains known as tetraspanin-enriched microdomains (TERMs), which act as platforms for receptor clustering and signaling. Participates thereby in diverse biological functions such as cell signal transduction, adhesion, migration and protein trafficking. Plays a role in the activation of monocytes and B-cells. Acts as an essential regulator of B-cell development by promoting interleukin-7 receptor/IL7R signaling. Also promotes, in B-cells, the BCR signaling by recruiting PKC to the plasma membrane in order to phosphorylate its substrates. Plays an essential role in B- and T-cells homing to lymph nodes by stabilizing L-selectin/SELL cell surface expression. Also mediates metabolic and inflammatory functions in hepatocytes and adipose tissue by promoting TNF-alpha and LPS signaling independent of the immune compartment. This is Leukocyte surface antigen CD53 (CD53) from Homo sapiens (Human).